Here is a 191-residue protein sequence, read N- to C-terminus: Ureidoglycolate lyase (191 aa).

The protein belongs to the ureidoglycolate lyase family. Homodimer.

The enzyme catalyses (S)-ureidoglycolate = urea + glyoxylate. The protein operates within nitrogen metabolism; (S)-allantoin degradation. In terms of biological role, catalyzes the catabolism of the allantoin degradation intermediate (S)-ureidoglycolate, generating urea and glyoxylate. Involved in the utilization of allantoin as secondary nitrogen source when primary sources are limiting. This chain is Ureidoglycolate lyase, found in Schizosaccharomyces pombe (strain 972 / ATCC 24843) (Fission yeast).